The following is a 301-amino-acid chain: NADH-cytochrome b5 reductase 3 (301 aa).

G2 carries N-myristoyl glycine lipidation. Residues 40–152 (DIKYPLRLID…RGPNGLLVYQ (113 aa)) enclose the FAD-binding FR-type domain. K42 carries the N6-acetyllysine modification. Y43 carries the post-translational modification Phosphotyrosine. At K50 the chain carries N6-acetyllysine. 6 residues coordinate FAD: R92, P93, Y94, V109, K111, and F114. Residue K120 is modified to N6-acetyllysine. Residues K126, M127, S128, and T185 each contribute to the FAD site.

This sequence belongs to the flavoprotein pyridine nucleotide cytochrome reductase family. As to quaternary structure, component of a complex composed of cytochrome b5, NADH-cytochrome b5 reductase (CYB5R3) and MTARC2. Interacts with MTLN; the interaction is required to maintain cellular lipid composition and leads to stimulation of mitochondrial respiratory complex I activity. It depends on FAD as a cofactor. In terms of processing, myristoylated. Ubiquitously expressed. In terms of tissue distribution, expressed only in erythroid tissues, reticulocytes and liver.

The protein resides in the endoplasmic reticulum membrane. Its subcellular location is the mitochondrion outer membrane. The protein localises to the cytoplasm. The catalysed reaction is 2 Fe(III)-[cytochrome b5] + NADH = 2 Fe(II)-[cytochrome b5] + NAD(+) + H(+). Catalyzes the reduction of two molecules of cytochrome b5 using NADH as the electron donor. In Rattus norvegicus (Rat), this protein is NADH-cytochrome b5 reductase 3.